The following is a 964-amino-acid chain: Lon protease homolog, mitochondrial (964 aa).

The Lon N-terminal domain maps to 89 to 300; that stretch reads VIALPLPHRP…LTLELVKKEM (212 aa). 455–462 serves as a coordination point for ATP; that stretch reads GPPGVGKT. The segment at 663–740 is disordered; the sequence is GVSNEPDHES…TSKGNKGTDG (78 aa). Residues 673-687 are compositionally biased toward polar residues; that stretch reads VSASVTEESGNGDNT. Over residues 688-698 the composition is skewed to basic and acidic residues; that stretch reads TTKDEILKDPA. Polar residues predominate over residues 703–712; it reads SVTNNVTNPA. Residues 773–957 form the Lon proteolytic domain; it reads HTPVGVVMGL…SEIYDLAFQS (185 aa). Active-site residues include Ser-863 and Lys-906.

Belongs to the peptidase S16 family. As to quaternary structure, homoheptamer. Organized in a ring with a central cavity.

Its subcellular location is the mitochondrion matrix. The catalysed reaction is Hydrolysis of proteins in presence of ATP.. Its function is as follows. ATP-dependent serine protease that mediates the selective degradation of misfolded, unassembled or oxidatively damaged polypeptides as well as certain short-lived regulatory proteins in the mitochondrial matrix. May also have a chaperone function in the assembly of inner membrane protein complexes. Participates in the regulation of mitochondrial gene expression and in the maintenance of the integrity of the mitochondrial genome. Binds to mitochondrial DNA in a site-specific manner. The chain is Lon protease homolog, mitochondrial (LON2) from Zea mays (Maize).